The primary structure comprises 204 residues: Peptidyl-tRNA hydrolase 2 (204 aa).

Tyr-37 is a tRNA binding site. Residue His-42 is the Proton acceptor of the active site. Positions 86, 88, and 134 each coordinate tRNA.

It belongs to the PTH family. As to quaternary structure, monomer.

It localises to the cytoplasm. It catalyses the reaction an N-acyl-L-alpha-aminoacyl-tRNA + H2O = an N-acyl-L-amino acid + a tRNA + H(+). Hydrolyzes ribosome-free peptidyl-tRNAs (with 1 or more amino acids incorporated), which drop off the ribosome during protein synthesis, or as a result of ribosome stalling. Its function is as follows. Catalyzes the release of premature peptidyl moieties from peptidyl-tRNA molecules trapped in stalled 50S ribosomal subunits, and thus maintains levels of free tRNAs and 50S ribosomes. This is Peptidyl-tRNA hydrolase 2 from Corynebacterium glutamicum (strain ATCC 13032 / DSM 20300 / JCM 1318 / BCRC 11384 / CCUG 27702 / LMG 3730 / NBRC 12168 / NCIMB 10025 / NRRL B-2784 / 534).